Here is a 562-residue protein sequence, read N- to C-terminus: MYALKRELWCVLLLCGAICTSPSQETHRRLRRGVRSYRVTCRDEKTQMIYQQHQSWLRPLLRGNRVEHCWCNDGQTQCHSVPVKSCSEPRCFNGGTCLQAIYFSDFVCQCPVGFIGRQCEIDARATCYEDQGITYRGTWSTTESGAECVNWNTSGLASMPYNGRRPDAVKLGLGNHNYCRNPDKDSKPWCYIFKAEKYSPDFCSTPACTKEKEECYTGKGLDYRGTRSLTMSGAFCLPWNSLVLMGKIYTAWNSNAQTLGLGKHNYCRNPDGDTQPWCHVLKDHKLTWEYCDLPQCVTCGLRQYKEPQFRIKGGLYADITSHPWQAAIFVKNRRSPGERFLCGGILISSCWVLSAAHCFQERFPPHHVRVVLGRTYRLVPGEEEQAFEVEKYIVHKEFDDDTYDNDIALLQLKSDSLTCAQESDAVRTVCLPEANLQLPDWTECELSGYGKHEASSPFYSERLKEAHVRLYPSSRCTSKHLFNKTITNNMLCAGDTRSGGDNANLHDACQGDSGGPLVCMKGNHMTLVGVISWGLGCGQKDVPGVYTKVTNYLNWIRDNTRP.

The signal sequence occupies residues 1–19; that stretch reads MYALKRELWCVLLLCGAIC. Positions 20-32 are excised as a propeptide; it reads TSPSQETHRRLRR. A propeptide spans 33-35 (removed by plasmin); that stretch reads GVR. Residues 39–81 enclose the Fibronectin type-I domain; that stretch reads VTCRDEKTQMIYQQHQSWLRPLLRGNRVEHCWCNDGQTQCHSV. Disulfide bonds link C41–C71, C69–C78, C86–C97, C91–C108, C110–C119, C127–C208, C148–C190, C179–C203, C215–C296, C236–C278, C267–C291, C299–C430, C342–C358, C350–C419, C444–C519, C476–C492, and C509–C537. Residues 42–52 form an important for binding to annexin A2 region; that stretch reads RDEKTQMIYQQ. An EGF-like domain is found at 82–120; it reads PVKSCSEPRCFNGGTCLQAIYFSDFVCQCPVGFIGRQCE. The O-linked (Fuc) threonine glycan is linked to T96. Kringle domains are found at residues 126–208 and 214–296; these read TCYE…TPAC and ECYT…LPQC. An N-linked (GlcNAc...) asparagine glycan is attached at N152. The 251-residue stretch at 311–561 folds into the Peptidase S1 domain; that stretch reads IKGGLYADIT…YLNWIRDNTR (251 aa). Residues H357 and D406 each act as charge relay system in the active site. N483 is a glycosylation site (N-linked (GlcNAc...) asparagine). The active-site Charge relay system is the S513.

The protein belongs to the peptidase S1 family. In terms of assembly, heterodimer of chain A and chain B held by a disulfide bond. Binds to fibrin with high affinity. This interaction leads to an increase in the catalytic efficiency of the enzyme due to an increase in affinity for plasminogen. Similarly, binding to heparin increases the activation of plasminogen. Binds to annexin A2, cytokeratin-8, fibronectin and laminin. Binds to mannose receptor and the low-density lipoprotein receptor-related protein (LRP1); these proteins are involved in TPA clearance. Binds LRP1B; binding is followed by internalization and degradation. Forms heterodimer with SERPINA5. Interacts with SERPINE1. In complex with SERPINE1, interacts with SORL1. Post-translationally, the single chain, almost fully active enzyme, can be further processed into a two-chain fully active form by a cleavage after Arg-310 catalyzed by plasmin, tissue kallikrein or factor Xa.

The protein resides in the secreted. It is found in the extracellular space. The enzyme catalyses Specific cleavage of Arg-|-Val bond in plasminogen to form plasmin.. Its activity is regulated as follows. Inhibited by SERPINA5. Inhibited by SERPINE1. Converts the abundant, but inactive, zymogen plasminogen to plasmin by hydrolyzing a single Arg-Val bond in plasminogen. By controlling plasmin-mediated proteolysis, it plays an important role in tissue remodeling and degradation, in cell migration and many other physiopathological events. During oocyte activation, plays a role in cortical granule reaction in the zona reaction, which contributes to the block to polyspermy. The polypeptide is Tissue-type plasminogen activator (PLAT) (Sus scrofa (Pig)).